Here is a 1505-residue protein sequence, read N- to C-terminus: Probable serine/threonine-protein kinase DDB_G0280133 (1505 aa).

PAS domains lie at N2–G72, R108–G178, and D215–H284. Disordered regions lie at residues D282–S348 and R398–Y533. Composition is skewed to low complexity over residues Q289–T314 and S328–T344. 2 stretches are compositionally biased toward basic and acidic residues: residues R398 to N407 and E415 to E430. Basic residues predominate over residues H431 to D443. Over residues N448–S468 the composition is skewed to low complexity. The span at S479–S489 shows a compositional bias: basic residues. Residues S515–S532 are compositionally biased toward low complexity. Positions Y542–L805 constitute a Protein kinase domain. Residues L548–V556 and K571 each bind ATP. The Proton acceptor role is filled by D684. Over residues N855–N960 the composition is skewed to low complexity. Disordered stretches follow at residues N855–Q1048, Q1072–Q1091, and Q1181–N1358. A coiled-coil region spans residues N903–N939. Residues L961 to Y974 are compositionally biased toward polar residues. Low complexity-rich tracts occupy residues Q975–H1013 and Q1022–Q1048. Polar residues predominate over residues Q1072–N1082. The stretch at I1125 to D1189 forms a coiled coil. The segment covering S1202–N1271 has biased composition (basic and acidic residues). Residues R1272 to N1282 are compositionally biased toward low complexity. Basic and acidic residues-rich tracts occupy residues N1283–K1301 and N1313–F1326. Over residues S1331–R1347 the composition is skewed to polar residues. Residues F1399–I1463 form the FHA domain.

This sequence belongs to the protein kinase superfamily. CAMK Ser/Thr protein kinase family. SNF1 subfamily.

The enzyme catalyses L-seryl-[protein] + ATP = O-phospho-L-seryl-[protein] + ADP + H(+). It carries out the reaction L-threonyl-[protein] + ATP = O-phospho-L-threonyl-[protein] + ADP + H(+). The protein is Probable serine/threonine-protein kinase DDB_G0280133 of Dictyostelium discoideum (Social amoeba).